The sequence spans 493 residues: Ubiquitin carboxyl-terminal hydrolase 14 (493 aa).

One can recognise a Ubiquitin-like domain in the interval 4 to 80; it reads YSVTVKWGKE…MMGSADALPE (77 aa). Threonine 52 bears the Phosphothreonine mark. The region spanning 105–482 is the USP domain; sequence CGLTNLGNTC…IAYVLLYGPR (378 aa). Residue cysteine 114 is the Nucleophile of the active site. A phosphoserine mark is found at serine 143, serine 148, serine 236, serine 301, and serine 431. Histidine 434 (proton acceptor) is an active-site residue. Lysine 448 is modified (N6-acetyllysine).

Belongs to the peptidase C19 family. USP14/UBP6 subfamily. As to quaternary structure, homodimer (Potential). Associates with the 26S proteasome. Interacts with FANCC, CXCR4 and ERN1. Interacts with TRIM14; this interaction recruits USP14 to cleave ubiquitin chains of CGAS.

It localises to the cytoplasm. It is found in the cell membrane. It carries out the reaction Thiol-dependent hydrolysis of ester, thioester, amide, peptide and isopeptide bonds formed by the C-terminal Gly of ubiquitin (a 76-residue protein attached to proteins as an intracellular targeting signal).. In terms of biological role, proteasome-associated deubiquitinase which releases ubiquitin from the proteasome targeted ubiquitinated proteins. Ensures the regeneration of ubiquitin at the proteasome. Is a reversibly associated subunit of the proteasome and a large fraction of proteasome-free protein exists within the cell. Required for the degradation of the chemokine receptor CXCR4 which is critical for CXCL12-induced cell chemotaxis. Also serves as a physiological inhibitor of endoplasmic reticulum-associated degradation (ERAD) under the non-stressed condition by inhibiting the degradation of unfolded endoplasmic reticulum proteins via interaction with ERN1. Indispensable for synaptic development and function at neuromuscular junctions (NMJs). Plays a role in the innate immune defense against viruses by stabilizing the viral DNA sensor CGAS and thus inhibiting its autophagic degradation. The sequence is that of Ubiquitin carboxyl-terminal hydrolase 14 (USP14) from Oryctolagus cuniculus (Rabbit).